Here is a 277-residue protein sequence, read N- to C-terminus: MQHESPTSGMNMSALRRHKQRLDLADESVAIEVPGLNLFYGDKQALFDIALNIPKQKVTSFIGPSGCGKSTLLRCFNRMNDLVDGCRVEGAINLYGHNIYTKGEEVAELRRRVGMVFQKPNPFPKTIYENVVYGLRIQGINKKRVLDEAVEWALKAAALWDEVKDRLHESALGLSGGQQQRLVIARTIAVEPEVLLLDEPCSALDPISTLKVEELIYELKSKYTIVIVTHNMQQAARVSDYTAFMYMGKLVEFGDTDTLFTNPAKKQTEDYITGRYG.

The ABC transporter domain maps to 31 to 272 (IEVPGLNLFY…PAKKQTEDYI (242 aa)). An ATP-binding site is contributed by 63–70 (GPSGCGKS).

Belongs to the ABC transporter superfamily. Phosphate importer (TC 3.A.1.7) family. In terms of assembly, the complex is composed of two ATP-binding proteins (PstB), two transmembrane proteins (PstC and PstA) and a solute-binding protein (PstS).

It localises to the cell inner membrane. The catalysed reaction is phosphate(out) + ATP + H2O = ADP + 2 phosphate(in) + H(+). Functionally, part of the ABC transporter complex PstSACB involved in phosphate import. Responsible for energy coupling to the transport system. The chain is Phosphate import ATP-binding protein PstB 2 from Pseudomonas syringae pv. syringae (strain B728a).